Reading from the N-terminus, the 667-residue chain is DNA ligase (667 aa).

NAD(+) contacts are provided by residues 30 to 34 (DSEYD), 79 to 80 (SL), and E112. The N6-AMP-lysine intermediate role is filled by K114. Positions 135, 172, 289, and 313 each coordinate NAD(+). Zn(2+) contacts are provided by C407, C410, C425, and C431. The 78-residue stretch at 590–667 (VRDNPLKGKT…SENEFLALLA (78 aa)) folds into the BRCT domain.

Belongs to the NAD-dependent DNA ligase family. LigA subfamily. Requires Mg(2+) as cofactor. Mn(2+) is required as a cofactor.

The catalysed reaction is NAD(+) + (deoxyribonucleotide)n-3'-hydroxyl + 5'-phospho-(deoxyribonucleotide)m = (deoxyribonucleotide)n+m + AMP + beta-nicotinamide D-nucleotide.. Functionally, DNA ligase that catalyzes the formation of phosphodiester linkages between 5'-phosphoryl and 3'-hydroxyl groups in double-stranded DNA using NAD as a coenzyme and as the energy source for the reaction. It is essential for DNA replication and repair of damaged DNA. The chain is DNA ligase from Histophilus somni (strain 2336) (Haemophilus somnus).